The following is a 261-amino-acid chain: Hydroxyethylthiazole kinase (261 aa).

Residue methionine 40 participates in substrate binding. Lysine 116 and threonine 162 together coordinate ATP. Position 189 (glycine 189) interacts with substrate.

The protein belongs to the Thz kinase family. Requires Mg(2+) as cofactor.

The enzyme catalyses 5-(2-hydroxyethyl)-4-methylthiazole + ATP = 4-methyl-5-(2-phosphooxyethyl)-thiazole + ADP + H(+). The protein operates within cofactor biosynthesis; thiamine diphosphate biosynthesis; 4-methyl-5-(2-phosphoethyl)-thiazole from 5-(2-hydroxyethyl)-4-methylthiazole: step 1/1. In terms of biological role, catalyzes the phosphorylation of the hydroxyl group of 4-methyl-5-beta-hydroxyethylthiazole (THZ). The protein is Hydroxyethylthiazole kinase of Methanosarcina mazei (strain ATCC BAA-159 / DSM 3647 / Goe1 / Go1 / JCM 11833 / OCM 88) (Methanosarcina frisia).